The sequence spans 791 residues: Protein FAM47A (791 aa).

Disordered regions lie at residues 195–257 (PVSH…TRRR), 274–409 (EDAR…TGVC), and 449–573 (VKKT…SEPP). 2 stretches are compositionally biased toward basic and acidic residues: residues 274–288 (EDAR…KTTD) and 333–342 (GESHLRLEHS). Positions 349-358 (SLRSEPSETG) are enriched in polar residues. Residues 449-462 (VKKTKEPTEPHKSP) are compositionally biased toward basic and acidic residues.

It belongs to the FAM47 family.

This Homo sapiens (Human) protein is Protein FAM47A (FAM47A).